The primary structure comprises 102 residues: Small ribosomal subunit protein uS10 (102 aa).

This sequence belongs to the universal ribosomal protein uS10 family. In terms of assembly, part of the 30S ribosomal subunit.

In terms of biological role, involved in the binding of tRNA to the ribosomes. The polypeptide is Small ribosomal subunit protein uS10 (Opitutus terrae (strain DSM 11246 / JCM 15787 / PB90-1)).